Reading from the N-terminus, the 289-residue chain is Homeobox protein Nkx-2.6 (289 aa).

Disordered stretches follow at residues 75–125 (GSNP…PQRK) and 259–289 (TPLA…VTAW). Positions 123 to 182 (QRKSRVLFSQAQVLALERRFKQQRYLTAPEREHLASALQLTSTQVKIWFQNRRYKSKSQR) form a DNA-binding region, homeobox. Residues 261–274 (LASSGFSPGGQSAA) are compositionally biased toward polar residues.

Belongs to the NK-2 homeobox family. Not detected in any neonate or adult tissues.

It localises to the nucleus. Functionally, acts as a transcriptional activator. In conjunction with NKX2-5, may play a role in both pharyngeal and cardiac embryonic development. The protein is Homeobox protein Nkx-2.6 (Nkx2-6) of Mus musculus (Mouse).